We begin with the raw amino-acid sequence, 287 residues long: Proteasome assembly chaperone 1 (287 aa).

The tract at residues Met-1–Arg-32 is disordered. Residues Asp-17 to Arg-32 are compositionally biased toward acidic residues.

This sequence belongs to the PSMG1 family. Forms a heterodimer with psmg2. Degraded by the proteasome upon completion of 20S proteasome maturation.

It localises to the cytoplasm. It is found in the endoplasmic reticulum. Chaperone protein which promotes assembly of the 20S proteasome as part of a heterodimer with psmg2. This chain is Proteasome assembly chaperone 1, found in Xenopus tropicalis (Western clawed frog).